The following is a 1360-amino-acid chain: MDLREKHLGEPPLALGLSTRKALSVLKEQLEAVLEKHLKERKKSLTWKEAWRSSFLHLSNRCSCFHWPGASLMLLAVLLLLCCCGGQPAGSQGVELVNASALFLLLLLNLVLIGRQDRLKRREVERRLRGIIDQIQDALRDGKEIKWPNSMYPDLHMPFAPSWSLHWAYRDGHLVNLPVSLLVEGDIIALRPGQESFASLRGIKDDEHIVLEPGDLFPPFSPPPSPRGEVKRGPQNPQQHRLFRVLETPVIDNIRWCLDTALSRPVTALDNERFTVQSVMLHYAVPVVLAGFLITNALRFMFKAPGVTSWQYTLLQLQVNGMLPILPLLFPVLWVLATACGEARVLAQMSKASPSSLLAKFSEDTLSSYTEAVSSQEMLRCIWGHFLRVIQGTSPTLSHSASLLHSLGSVTVLCCVDKQGILSWPNPSPETVLFFSGKVEPPHSSHEDLTDDLSTRSFCHPEVEEEPHEHDALLAGSLNNTLHLSNEQERSDWLADGPKPSEPYPHHKGHGRSKHPSGSNVSFSRDTEGGEEEPSKAQPGTEGDPYEAEDFVCDYHLEMLSLSQDQQNPSCIQFDDSNWQSHLTSLKPLGLNVLLNLCNASVTERLCRFSDHLCNIALQESHSAVLPVHVPWGLCELARLIGFTPGAKELFKQENHLALYRLPSAETLKETSLGRPSCVTKRRPPLSHMISLFIKDTATSTEQMLSHGSADVVVEACTDFWDGADIYPLSGSDRKKVLDFYQRACLSGYCSAFAYKPMNCTLSSQLNGKCIELVQVPGQNSIFTMCELPSTIPIKPNNRRSSWSSDEGIGEVLEKEDCMQALSGQIFMGMVSSQYQARLDIVRLIDGLVNACIRFVYFSLEDELRSKVFAEKMGLETGWNCHISLTPNGDMPGSEIPPSSPSHAGSLHDDLNQVSRDDAEGLLLLEEEGHSDLISFQPTDSDIPSFLEDCNRAKLPRGIHQVRPHLQNIDNVPLLVPLFTDCTPDTMCEMIKIMQEYGEVTCCLGSSANLRNSCLFLQSDVSIALDPLYPSRCSWETFGYATSTTMAQASDGLSPLQLSGQLNSLPCSLTFRQEESISIIRLIEQARHATYGIRKCFLFLLQCQLTLVVIQFLSCLVQLPPLLSTTDILWLSCFCYPLLSISLLGKPPHSSIMSMATGKNLQSIPKKTQHYFLLCFLLKFSLTISSCLVCFGFTLQSFCDSARARNLTNCSSVMLCSNDDRAPAWFEDFANGLLSAQKLTAALIVLHTVFISITHVHRTKPLWRKSPLTNLWWAVTVPVVLLGQVVQTVVDLQLWTHRDSRVHFGLEDVPLLTWLLGCLSLVLVVVTNEIVKLHEIRVRVRYQKRQKLQFETKLGMNSPF.

Residues 1-64 lie on the Cytoplasmic side of the membrane; it reads MDLREKHLGE…FLHLSNRCSC (64 aa). A helical transmembrane segment spans residues 65–85; it reads FHWPGASLMLLAVLLLLCCCG. Over 86–92 the chain is Lumenal; it reads GQPAGSQ. A helical transmembrane segment spans residues 93–113; the sequence is GVELVNASALFLLLLLNLVLI. The Cytoplasmic portion of the chain corresponds to 114 to 273; sequence GRQDRLKRRE…RPVTALDNER (160 aa). Phosphoserine occurs at positions 221 and 225. Residues 274–294 traverse the membrane as a helical segment; sequence FTVQSVMLHYAVPVVLAGFLI. Topologically, residues 295 to 320 are lumenal; that stretch reads TNALRFMFKAPGVTSWQYTLLQLQVN. Residues 321–341 traverse the membrane as a helical segment; sequence GMLPILPLLFPVLWVLATACG. At 342 to 1096 the chain is on the cytoplasmic side; that stretch reads EARVLAQMSK…RHATYGIRKC (755 aa). A DKQGIL motif is present at residues 417 to 422; sequence DKQGIL. Phosphoserine is present on residues S444, S445, and S454. The interval 487–545 is disordered; it reads EQERSDWLADGPKPSEPYPHHKGHGRSKHPSGSNVSFSRDTEGGEEEPSKAQPGTEGDP. Basic residues predominate over residues 506-515; it reads HHKGHGRSKH. A phosphoserine mark is found at S517, S522, S802, and S945. A helical transmembrane segment spans residues 1097 to 1117; that stretch reads FLFLLQCQLTLVVIQFLSCLV. Over 1118–1124 the chain is Lumenal; sequence QLPPLLS. A helical transmembrane segment spans residues 1125-1145; sequence TTDILWLSCFCYPLLSISLLG. The Cytoplasmic portion of the chain corresponds to 1146–1171; the sequence is KPPHSSIMSMATGKNLQSIPKKTQHY. The helical transmembrane segment at 1172 to 1192 threads the bilayer; the sequence is FLLCFLLKFSLTISSCLVCFG. The Lumenal segment spans residues 1193–1232; that stretch reads FTLQSFCDSARARNLTNCSSVMLCSNDDRAPAWFEDFANG. 2 N-linked (GlcNAc...) asparagine glycosylation sites follow: N1206 and N1209. A helical transmembrane segment spans residues 1233-1253; the sequence is LLSAQKLTAALIVLHTVFISI. Topologically, residues 1254 to 1269 are cytoplasmic; that stretch reads THVHRTKPLWRKSPLT. A helical membrane pass occupies residues 1270 to 1290; it reads NLWWAVTVPVVLLGQVVQTVV. Residues 1291 to 1310 lie on the Lumenal side of the membrane; the sequence is DLQLWTHRDSRVHFGLEDVP. A helical membrane pass occupies residues 1311 to 1331; sequence LLTWLLGCLSLVLVVVTNEIV. The Cytoplasmic segment spans residues 1332-1360; sequence KLHEIRVRVRYQKRQKLQFETKLGMNSPF. Positions 1355-1357 match the GMN; metal-binding motif motif; it reads GMN.

In terms of assembly, forms homooligomers.

The protein localises to the endoplasmic reticulum membrane. Functionally, could function in the uptake of Mg(2+) from the cytosol into the endoplasmic reticulum and regulate intracellular Mg(2+) homeostasis. In Mus musculus (Mouse), this protein is Transmembrane protein 94.